A 715-amino-acid chain; its full sequence is Fatty acid oxidation complex subunit alpha (715 aa).

An enoyl-CoA hydratase region spans residues Met-1 to Pro-190. The tract at residues Gly-306–Asn-715 is 3-hydroxyacyl-CoA dehydrogenase.

In the N-terminal section; belongs to the enoyl-CoA hydratase/isomerase family. The protein in the central section; belongs to the 3-hydroxyacyl-CoA dehydrogenase family. In terms of assembly, heterotetramer of two alpha chains (FadJ) and two beta chains (FadI).

The protein localises to the cytoplasm. The catalysed reaction is a (3S)-3-hydroxyacyl-CoA = a (2E)-enoyl-CoA + H2O. It catalyses the reaction a 4-saturated-(3S)-3-hydroxyacyl-CoA = a (3E)-enoyl-CoA + H2O. It carries out the reaction a (3S)-3-hydroxyacyl-CoA + NAD(+) = a 3-oxoacyl-CoA + NADH + H(+). The enzyme catalyses (3S)-3-hydroxybutanoyl-CoA = (3R)-3-hydroxybutanoyl-CoA. It functions in the pathway lipid metabolism; fatty acid beta-oxidation. Functionally, catalyzes the formation of a hydroxyacyl-CoA by addition of water on enoyl-CoA. Also exhibits 3-hydroxyacyl-CoA epimerase and 3-hydroxyacyl-CoA dehydrogenase activities. The sequence is that of Fatty acid oxidation complex subunit alpha from Salmonella gallinarum (strain 287/91 / NCTC 13346).